We begin with the raw amino-acid sequence, 89 residues long: Small ribosomal subunit protein uS15 (89 aa).

This sequence belongs to the universal ribosomal protein uS15 family. Part of the 30S ribosomal subunit. Forms a bridge to the 50S subunit in the 70S ribosome, contacting the 23S rRNA.

Its function is as follows. One of the primary rRNA binding proteins, it binds directly to 16S rRNA where it helps nucleate assembly of the platform of the 30S subunit by binding and bridging several RNA helices of the 16S rRNA. Forms an intersubunit bridge (bridge B4) with the 23S rRNA of the 50S subunit in the ribosome. This is Small ribosomal subunit protein uS15 from Desulfotalea psychrophila (strain LSv54 / DSM 12343).